A 201-amino-acid chain; its full sequence is Large ribosomal subunit protein uL4 (201 aa).

Residues 44–73 (RAQKSRAEVKASRKKPWRQKGTGRARAGSV) form a disordered region. A compositionally biased stretch (basic residues) spans 55-66 (SRKKPWRQKGTG).

This sequence belongs to the universal ribosomal protein uL4 family. In terms of assembly, part of the 50S ribosomal subunit.

In terms of biological role, one of the primary rRNA binding proteins, this protein initially binds near the 5'-end of the 23S rRNA. It is important during the early stages of 50S assembly. It makes multiple contacts with different domains of the 23S rRNA in the assembled 50S subunit and ribosome. Its function is as follows. Forms part of the polypeptide exit tunnel. This chain is Large ribosomal subunit protein uL4, found in Hamiltonella defensa subsp. Acyrthosiphon pisum (strain 5AT).